Here is a 422-residue protein sequence, read N- to C-terminus: Tyrosine--tRNA ligase (422 aa).

Residue Tyr-37 coordinates L-tyrosine. Positions 42-51 (PTEESLHIGH) match the 'HIGH' region motif. L-tyrosine contacts are provided by Tyr-175 and Gln-179. The 'KMSKS' region motif lies at 235–239 (KFGKT). Lys-238 serves as a coordination point for ATP. The region spanning 357 to 414 (KDLQEALVLTSLAQSRTQAKNMIISNSISINTEKIRKNHIFHEKDKLFGKFTLLSRGK) is the S4 RNA-binding domain.

This sequence belongs to the class-I aminoacyl-tRNA synthetase family. TyrS type 1 subfamily. As to quaternary structure, homodimer.

The protein resides in the cytoplasm. The enzyme catalyses tRNA(Tyr) + L-tyrosine + ATP = L-tyrosyl-tRNA(Tyr) + AMP + diphosphate + H(+). Functionally, catalyzes the attachment of tyrosine to tRNA(Tyr) in a two-step reaction: tyrosine is first activated by ATP to form Tyr-AMP and then transferred to the acceptor end of tRNA(Tyr). This chain is Tyrosine--tRNA ligase, found in Buchnera aphidicola subsp. Acyrthosiphon pisum (strain APS) (Acyrthosiphon pisum symbiotic bacterium).